The chain runs to 1345 residues: Major capsid protein (1345 aa).

It belongs to the herpesviridae major capsid protein family. Homomultimer. Makes the hexons and eleven out of twelve pentons. Interacts with triplex proteins 1/TRX1 and 2/TRX2; adjacent capsomers are linked together in groups of three by triplexes, heterotrimeric complexes composed of one molecule of TRX1 and two molecules of TRX2. Interacts with scaffold protein; this interaction allows efficient MCP transport to the host nucleus. Interacts with capsid vertex component 2/CVC2. Interacts with the small capsomere-interacting protein/SCP.

The protein resides in the virion. It is found in the host nucleus. Functionally, self-assembles to form an icosahedral capsid with a T=16 symmetry, about 200 nm in diameter, and consisting of 150 hexons and 12 pentons (total of 162 capsomers). Hexons form the edges and faces of the capsid and are each composed of six MCP molecules. In contrast, one penton is found at each of the 12 vertices. Eleven of the pentons are MCP pentamers, while the last vertex is occupied by the portal complex. The capsid is surrounded by a layer of proteinaceous material designated the tegument which, in turn, is enclosed in an envelope of host cell-derived lipids containing virus-encoded glycoproteins. The protein is Major capsid protein of Human herpesvirus 6A (strain Uganda-1102) (HHV-6 variant A).